A 293-amino-acid polypeptide reads, in one-letter code: Amine sulfotransferase (293 aa).

46–51 provides a ligand contact to 3'-phosphoadenylyl sulfate; sequence KSGTIW. Histidine 101 acts as the Proton acceptor in catalysis. Residues arginine 123, serine 131, 220–225, and 252–254 contribute to the 3'-phosphoadenylyl sulfate site; these read ATFQKM and RKG.

This sequence belongs to the sulfotransferase 1 family.

Its subcellular location is the cytoplasm. The catalysed reaction is a primary amine + 3'-phosphoadenylyl sulfate = a sulfamate + adenosine 3',5'-bisphosphate + 2 H(+). Sulfotransferase that utilizes 3'-phospho-5'-adenylyl sulfate (PAPS) as sulfonate donor to catalyze the N-sulfonation of amines. This Mus musculus (Mouse) protein is Amine sulfotransferase (Sult3a1).